The chain runs to 231 residues: ATP phosphoribosyltransferase (231 aa).

This sequence belongs to the ATP phosphoribosyltransferase family. Short subfamily. In terms of assembly, heteromultimer composed of HisG and HisZ subunits.

Its subcellular location is the cytoplasm. It carries out the reaction 1-(5-phospho-beta-D-ribosyl)-ATP + diphosphate = 5-phospho-alpha-D-ribose 1-diphosphate + ATP. It functions in the pathway amino-acid biosynthesis; L-histidine biosynthesis; L-histidine from 5-phospho-alpha-D-ribose 1-diphosphate: step 1/9. In terms of biological role, catalyzes the condensation of ATP and 5-phosphoribose 1-diphosphate to form N'-(5'-phosphoribosyl)-ATP (PR-ATP). Has a crucial role in the pathway because the rate of histidine biosynthesis seems to be controlled primarily by regulation of HisG enzymatic activity. This chain is ATP phosphoribosyltransferase, found in Psychrobacter arcticus (strain DSM 17307 / VKM B-2377 / 273-4).